Consider the following 917-residue polypeptide: Hexokinase-2 (917 aa).

Methionine 1 is modified (N-acetylmethionine). The mitochondrial-binding peptide (MBP) stretch occupies residues 1–16 (MIASHLLAYFFTELNH). Hexokinase domains lie at 16-458 (HDQV…MVTA) and 464-906 (ADQH…LITA). Residues arginine 30 and 84–89 (DLGGTN) each bind ATP. The hexokinase small subdomain 1 stretch occupies residues 73 to 207 (DGTEHGEFLA…DFDIDIVAVV (135 aa)). 84–88 (DLGGT) contacts D-glucose 6-phosphate. Residues 155–156 (SF), 172–173 (TK), and 208–209 (ND) contribute to the D-glucose site. The tract at residues 208 to 447 (NDTVGTMMTC…CDVRFLRSED (240 aa)) is hexokinase large subdomain 1. D-glucose 6-phosphate is bound by residues aspartate 209 and threonine 232. D-glucose-binding positions include asparagine 235, glutamate 260, and 291–294 (QLFE). D-glucose 6-phosphate is bound at residue 413-415 (DGS). 425 to 426 (KR) contacts ATP. Residues serine 449 and 532 to 536 (DLGGT) each bind D-glucose 6-phosphate. Positions 521–655 (DGTEKGDFLA…EFDLDVVAVV (135 aa)) are hexokinase small subdomain 2. 532 to 537 (DLGGTN) contributes to the ATP binding site. Residues 603–604 (SF), 620–621 (TK), and 656–657 (ND) each bind D-glucose. The interval 656–895 (NDTVGTMMTC…CDVSFLQSED (240 aa)) is hexokinase large subdomain 2. Positions 657 and 680 each coordinate D-glucose 6-phosphate. Threonine 680 provides a ligand contact to ATP. D-glucose contacts are provided by residues 682-683 (SN), glutamate 708, and 739-742 (QRFE). Residues 747–748 (GM), 784–788 (TKFLS), and 863–867 (TLYKL) contribute to the ATP site. Residues 861–863 (DGT) and serine 897 contribute to the D-glucose 6-phosphate site.

This sequence belongs to the hexokinase family. In terms of assembly, monomer. Interacts with TIGAR; the interaction increases hexokinase activity in a hypoxia- and HIF1A-dependent manner. As to expression, predominant hexokinase isozyme expressed in insulin-responsive tissues such as skeletal muscle.

The protein resides in the mitochondrion outer membrane. Its subcellular location is the cytoplasm. It is found in the cytosol. The catalysed reaction is a D-hexose + ATP = a D-hexose 6-phosphate + ADP + H(+). It carries out the reaction D-fructose + ATP = D-fructose 6-phosphate + ADP + H(+). It catalyses the reaction D-glucose + ATP = D-glucose 6-phosphate + ADP + H(+). Its pathway is carbohydrate metabolism; hexose metabolism. It participates in carbohydrate degradation; glycolysis; D-glyceraldehyde 3-phosphate and glycerone phosphate from D-glucose: step 1/4. Hexokinase activity is specifically inhibited by 2,6-disubstituted glucosamines. Its function is as follows. Catalyzes the phosphorylation of hexose, such as D-glucose and D-fructose, to hexose 6-phosphate (D-glucose 6-phosphate and D-fructose 6-phosphate, respectively). Mediates the initial step of glycolysis by catalyzing phosphorylation of D-glucose to D-glucose 6-phosphate. Plays a key role in maintaining the integrity of the outer mitochondrial membrane by preventing the release of apoptogenic molecules from the intermembrane space and subsequent apoptosis. The sequence is that of Hexokinase-2 from Homo sapiens (Human).